A 361-amino-acid polypeptide reads, in one-letter code: N-methyltransferase benX (361 aa).

It belongs to the methyltransferase superfamily.

Its pathway is secondary metabolite biosynthesis. Its function is as follows. N-methyltransferase; part of the gene cluster that mediates the biosynthesis of benzomalvin A and D. The pathway begins with the loading of amino acid precursors onto the A domains of the non ribosomal peptide synthetases benY and benZ. BenY and the A1 domain of benZ are loaded with anthranilate (Anth), while the A2 domain of benZ is loaded with phenylalanine (Phe). N-methylation of Phe by the methyltransferase benX may happen before loading of Phe onto benZ, after loading of Phe, or after dipeptide formation. Condensation of Anth with the secondary amine of NmPhe or Phe is catalyzed by the C1 domain of benZ, forming a dipeptide intermediate. This is followed by in trans condensation of the Anth-NmPhe dipeptide with Anth bound to the T domain of benY by the C2 domain of benZ to form the linear tripeptide Anth-NmPhe-Anth. Cyclization and release of the tripeptide is then catalyzed by the C-terminal C domain of benY and the resulting 11-member macrocyclic intermediate is expected to spontaneously collapse to form the benzodiazepine core. Benzomalvin A is in conformational equilibrium with its atropisomer, benzomalvin D. The protein is N-methyltransferase benX of Aspergillus terreus.